The chain runs to 329 residues: DNA-directed RNA polymerase subunit alpha (329 aa).

The interval Met-1–Arg-234 is alpha N-terminal domain (alpha-NTD). The tract at residues Phe-248 to Leu-329 is alpha C-terminal domain (alpha-CTD).

Belongs to the RNA polymerase alpha chain family. Homodimer. The RNAP catalytic core consists of 2 alpha, 1 beta, 1 beta' and 1 omega subunit. When a sigma factor is associated with the core the holoenzyme is formed, which can initiate transcription.

It catalyses the reaction RNA(n) + a ribonucleoside 5'-triphosphate = RNA(n+1) + diphosphate. In terms of biological role, DNA-dependent RNA polymerase catalyzes the transcription of DNA into RNA using the four ribonucleoside triphosphates as substrates. The polypeptide is DNA-directed RNA polymerase subunit alpha (Shewanella sp. (strain ANA-3)).